The primary structure comprises 429 residues: Glutamyl-tRNA reductase (429 aa).

Substrate-binding positions include T52–R55, S110, E115–Q117, and Q121. The active-site Nucleophile is the C53. Residue G190 to I195 participates in NADP(+) binding.

Belongs to the glutamyl-tRNA reductase family. In terms of assembly, homodimer.

The enzyme catalyses (S)-4-amino-5-oxopentanoate + tRNA(Glu) + NADP(+) = L-glutamyl-tRNA(Glu) + NADPH + H(+). It participates in porphyrin-containing compound metabolism; protoporphyrin-IX biosynthesis; 5-aminolevulinate from L-glutamyl-tRNA(Glu): step 1/2. Catalyzes the NADPH-dependent reduction of glutamyl-tRNA(Glu) to glutamate 1-semialdehyde (GSA). The polypeptide is Glutamyl-tRNA reductase (Verminephrobacter eiseniae (strain EF01-2)).